Here is a 452-residue protein sequence, read N- to C-terminus: Ribulose bisphosphate carboxylase large chain (452 aa).

Positions 1–2 are excised as a propeptide; sequence MS. Pro-3 bears the N-acetylproline mark. Position 14 is an N6,N6,N6-trimethyllysine (Lys-14). The substrate site is built by Asn-123 and Thr-173. Residue Lys-175 is the Proton acceptor of the active site. Lys-177 lines the substrate pocket. Mg(2+) contacts are provided by Lys-201, Asp-203, and Glu-204. Position 201 is an N6-carboxylysine (Lys-201). His-294 functions as the Proton acceptor in the catalytic mechanism. The substrate site is built by Arg-295, Xaa-327, and Ser-379.

This sequence belongs to the RuBisCO large chain family. Type I subfamily. As to quaternary structure, heterohexadecamer of 8 large chains and 8 small chains; disulfide-linked. The disulfide link is formed within the large subunit homodimers. It depends on Mg(2+) as a cofactor. The disulfide bond which can form in the large chain dimeric partners within the hexadecamer appears to be associated with oxidative stress and protein turnover.

It localises to the plastid. The protein resides in the chloroplast. The enzyme catalyses 2 (2R)-3-phosphoglycerate + 2 H(+) = D-ribulose 1,5-bisphosphate + CO2 + H2O. It carries out the reaction D-ribulose 1,5-bisphosphate + O2 = 2-phosphoglycolate + (2R)-3-phosphoglycerate + 2 H(+). Its function is as follows. RuBisCO catalyzes two reactions: the carboxylation of D-ribulose 1,5-bisphosphate, the primary event in carbon dioxide fixation, as well as the oxidative fragmentation of the pentose substrate in the photorespiration process. Both reactions occur simultaneously and in competition at the same active site. The sequence is that of Ribulose bisphosphate carboxylase large chain from Salvadora persica (Toothbrush tree).